A 479-amino-acid chain; its full sequence is Sulfate adenylyltransferase subunit 1 (479 aa).

The tr-type G domain occupies 25 to 239 (KSLLRFLTCG…EVLETVDIQR (215 aa)). Positions 34–41 (GSVDDGKS) are G1. GTP is bound at residue 34–41 (GSVDDGKS). The tract at residues 92 to 96 (GITID) is G2. The tract at residues 113–116 (DTPG) is G3. Residues 113–117 (DTPGH) and 168–171 (NKMD) each bind GTP. Positions 168 to 171 (NKMD) are G4. The G5 stretch occupies residues 206–208 (SAL).

It belongs to the TRAFAC class translation factor GTPase superfamily. Classic translation factor GTPase family. CysN/NodQ subfamily. Heterodimer composed of CysD, the smaller subunit, and CysN.

The enzyme catalyses sulfate + ATP + H(+) = adenosine 5'-phosphosulfate + diphosphate. Its pathway is sulfur metabolism; hydrogen sulfide biosynthesis; sulfite from sulfate: step 1/3. Its function is as follows. With CysD forms the ATP sulfurylase (ATPS) that catalyzes the adenylation of sulfate producing adenosine 5'-phosphosulfate (APS) and diphosphate, the first enzymatic step in sulfur assimilation pathway. APS synthesis involves the formation of a high-energy phosphoric-sulfuric acid anhydride bond driven by GTP hydrolysis by CysN coupled to ATP hydrolysis by CysD. This is Sulfate adenylyltransferase subunit 1 from Salmonella arizonae (strain ATCC BAA-731 / CDC346-86 / RSK2980).